The sequence spans 118 residues: Large ribosomal subunit protein uL18 (118 aa).

Belongs to the universal ribosomal protein uL18 family. As to quaternary structure, part of the 50S ribosomal subunit; part of the 5S rRNA/L5/L18/L25 subcomplex. Contacts the 5S and 23S rRNAs.

Functionally, this is one of the proteins that bind and probably mediate the attachment of the 5S RNA into the large ribosomal subunit, where it forms part of the central protuberance. This chain is Large ribosomal subunit protein uL18, found in Helicobacter pylori (strain P12).